The chain runs to 230 residues: UPF0173 metal-dependent hydrolase Pden_0574 (230 aa).

This sequence belongs to the UPF0173 family.

The chain is UPF0173 metal-dependent hydrolase Pden_0574 from Paracoccus denitrificans (strain Pd 1222).